The chain runs to 375 residues: Succinyl-diaminopimelate desuccinylase (375 aa).

Histidine 66 is a binding site for Zn(2+). Aspartate 68 is an active-site residue. Residue aspartate 99 participates in Zn(2+) binding. The active-site Proton acceptor is glutamate 133. Glutamate 134, glutamate 162, and histidine 348 together coordinate Zn(2+).

The protein belongs to the peptidase M20A family. DapE subfamily. Homodimer. Zn(2+) serves as cofactor. Co(2+) is required as a cofactor.

The catalysed reaction is N-succinyl-(2S,6S)-2,6-diaminopimelate + H2O = (2S,6S)-2,6-diaminopimelate + succinate. It participates in amino-acid biosynthesis; L-lysine biosynthesis via DAP pathway; LL-2,6-diaminopimelate from (S)-tetrahydrodipicolinate (succinylase route): step 3/3. Catalyzes the hydrolysis of N-succinyl-L,L-diaminopimelic acid (SDAP), forming succinate and LL-2,6-diaminopimelate (DAP), an intermediate involved in the bacterial biosynthesis of lysine and meso-diaminopimelic acid, an essential component of bacterial cell walls. The polypeptide is Succinyl-diaminopimelate desuccinylase (Yersinia enterocolitica serotype O:8 / biotype 1B (strain NCTC 13174 / 8081)).